Here is a 71-residue protein sequence, read N- to C-terminus: MMSKLGALLIICLLLFPLTAVPLDGDQHADRPAERLQDDISSKHHPMFDAVRGCCHPSTCHMRKGCSRCCS.

Positions 1–20 are cleaved as a signal peptide; it reads MMSKLGALLIICLLLFPLTA. The propeptide occupies 21–52; sequence VPLDGDQHADRPAERLQDDISSKHHPMFDAVR. Intrachain disulfides connect Cys-54–Cys-70, Cys-55–Cys-66, and Cys-60–Cys-69.

The protein belongs to the conotoxin M superfamily. As to expression, expressed by the venom duct.

It localises to the secreted. The chain is Conotoxin TxMMSK-05 from Conus textile (Cloth-of-gold cone).